The chain runs to 259 residues: MKHSSKIIVFVSFLILTIFIGGCGFINKEDSKEAEIKQNFNKTLSMYPTKNLEDFYDKEGYRDEEFDKDDKGTWIINSKMIVEPKGEEMEARGMVLRINRNTRTAKGNFIIKRITENNKGIPDVKDKKYPVKMEHNKIIPTKQIKDKKLKKEIENFKFFVQYGNFKNLKDYKDGEISYNPNVPSYSAQYQLNNYDNNVKQLRKRYDIPTNQAPKLLLKGTGDLKGSSVGYKHLEFTFVENKKENIYFTDSINFNPSRGN.

Positions 1 to 22 (MKHSSKIIVFVSFLILTIFIGG) are cleaved as a signal peptide. The N-palmitoyl cysteine moiety is linked to residue Cys23. Cys23 carries the S-diacylglycerol cysteine lipid modification.

The protein belongs to the staphylococcal tandem lipoprotein family.

Its subcellular location is the cell membrane. This is an uncharacterized protein from Staphylococcus epidermidis (strain ATCC 35984 / DSM 28319 / BCRC 17069 / CCUG 31568 / BM 3577 / RP62A).